The primary structure comprises 325 residues: Chain length determinant protein (325 aa).

At 1-31 (MRVENNNVSGQNHDPEQIDLIDLLVQLWRGK) the chain is on the cytoplasmic side. Residues 32–52 (MTIIISVIVAIALAIGYLAVA) form a helical membrane-spanning segment. The Periplasmic portion of the chain corresponds to 53-294 (KEKWTSTAII…LPIRRDSPKK (242 aa)). Residues 295–315 (AITLILAVLLGGMVGAGIVLG) traverse the membrane as a helical segment. Residues 316 to 325 (RNALRNYNAK) lie on the Cytoplasmic side of the membrane.

It belongs to the WzzB/Cld/Rol family.

It localises to the cell inner membrane. The protein operates within bacterial outer membrane biogenesis; lipopolysaccharide biosynthesis. Confers a modal distribution of chain length on the O-antigen component of lipopolysaccharide (LPS). Gives rise to a reduced number of short chain molecules and increases in numbers of longer molecules. In Shigella flexneri, this protein is Chain length determinant protein (wzzB).